The primary structure comprises 220 residues: 26S proteasome non-ATPase regulatory subunit 9 (220 aa).

Coiled-coil stretches lie at residues Gly4–Leu32 and Arg61–Glu91. The PDZ domain occupies Arg102 to Thr200.

It belongs to the proteasome subunit p27 family. Interacts with PI31; this interaction is increased by PI31 ADP-ribosylation. Interacts with Rpt5.

Acts as a chaperone during the assembly of the 26S proteasome, specifically of the base subcomplex of the PA700/19S regulatory complex (RC). In Drosophila melanogaster (Fruit fly), this protein is 26S proteasome non-ATPase regulatory subunit 9.